A 122-amino-acid chain; its full sequence is Probable transcription factor PqrA (122 aa).

An HTH araC/xylS-type domain is found at asparagine 7–asparagine 107. 2 DNA-binding regions (H-T-H motif) span residues aspartate 26–lysine 47 and isoleucine 74–phenylalanine 97.

Its function is as follows. Upon expression in E.coli strain KY2563 confers resistance to antibiotics ofloxacin, ciprofloxacin, tetracycline, chloramphenicol, and ceftazidime (increases minimal inhibitory concentration by 8-32 times); also decreases expression of OmpF. This chain is Probable transcription factor PqrA, found in Proteus vulgaris.